A 185-amino-acid polypeptide reads, in one-letter code: MKRLLENSLETCPIVKRGPYHYFIHPISDGVPLVEPELLRDVSTRVIKMIDTNVDKIVTAEAMGIPIVTAVSIATDIPYVIMRKREYLLEGEVPVHQETGYSKGELYLNGINKGDKVVILDDVISTGGTLVAIIRALKRAGADIKDVVCIIDRGQGKNIVEKETGYKVKTLVKIEVVDGKVKILE.

This sequence belongs to the purine/pyrimidine phosphoribosyltransferase family. Archaeal HPRT subfamily. As to quaternary structure, homodimer.

It localises to the cytoplasm. The enzyme catalyses IMP + diphosphate = hypoxanthine + 5-phospho-alpha-D-ribose 1-diphosphate. The catalysed reaction is GMP + diphosphate = guanine + 5-phospho-alpha-D-ribose 1-diphosphate. Its pathway is purine metabolism; IMP biosynthesis via salvage pathway; IMP from hypoxanthine: step 1/1. In terms of biological role, catalyzes a salvage reaction resulting in the formation of IMP that is energically less costly than de novo synthesis. In Methanococcus vannielii (strain ATCC 35089 / DSM 1224 / JCM 13029 / OCM 148 / SB), this protein is Hypoxanthine/guanine phosphoribosyltransferase.